Consider the following 452-residue polypeptide: Bifunctional protein GlmU (452 aa).

Residues 1 to 225 (MDVVILAAGL…ENELIGINTR (225 aa)) are pyrophosphorylase. Residues 6 to 9 (LAAG), K20, Q71, and 76 to 77 (GT) each bind UDP-N-acetyl-alpha-D-glucosamine. Mg(2+) is bound at residue D99. Residues G136, E151, N166, and N223 each contribute to the UDP-N-acetyl-alpha-D-glucosamine site. A Mg(2+)-binding site is contributed by N223. The segment at 226–246 (AELSLAMRYLRDRIVKGWMEK) is linker. The interval 247–452 (GITFYDPALV…LGWAKKKRKQ (206 aa)) is N-acetyltransferase. R329 and K347 together coordinate UDP-N-acetyl-alpha-D-glucosamine. Catalysis depends on H359, which acts as the Proton acceptor. The UDP-N-acetyl-alpha-D-glucosamine site is built by Y362 and N373. Acetyl-CoA is bound by residues A376, 382 to 383 (NY), S401, A419, and R436.

In the N-terminal section; belongs to the N-acetylglucosamine-1-phosphate uridyltransferase family. The protein in the C-terminal section; belongs to the transferase hexapeptide repeat family. As to quaternary structure, homotrimer. The cofactor is Mg(2+).

The protein resides in the cytoplasm. It catalyses the reaction alpha-D-glucosamine 1-phosphate + acetyl-CoA = N-acetyl-alpha-D-glucosamine 1-phosphate + CoA + H(+). The catalysed reaction is N-acetyl-alpha-D-glucosamine 1-phosphate + UTP + H(+) = UDP-N-acetyl-alpha-D-glucosamine + diphosphate. Its pathway is nucleotide-sugar biosynthesis; UDP-N-acetyl-alpha-D-glucosamine biosynthesis; N-acetyl-alpha-D-glucosamine 1-phosphate from alpha-D-glucosamine 6-phosphate (route II): step 2/2. It participates in nucleotide-sugar biosynthesis; UDP-N-acetyl-alpha-D-glucosamine biosynthesis; UDP-N-acetyl-alpha-D-glucosamine from N-acetyl-alpha-D-glucosamine 1-phosphate: step 1/1. The protein operates within bacterial outer membrane biogenesis; LPS lipid A biosynthesis. In terms of biological role, catalyzes the last two sequential reactions in the de novo biosynthetic pathway for UDP-N-acetylglucosamine (UDP-GlcNAc). The C-terminal domain catalyzes the transfer of acetyl group from acetyl coenzyme A to glucosamine-1-phosphate (GlcN-1-P) to produce N-acetylglucosamine-1-phosphate (GlcNAc-1-P), which is converted into UDP-GlcNAc by the transfer of uridine 5-monophosphate (from uridine 5-triphosphate), a reaction catalyzed by the N-terminal domain. This Thermodesulfovibrio yellowstonii (strain ATCC 51303 / DSM 11347 / YP87) protein is Bifunctional protein GlmU.